The chain runs to 295 residues: Bifunctional protein FolD 1 (295 aa).

NADP(+) is bound by residues 165-167, I190, and I231; that span reads GKS.

This sequence belongs to the tetrahydrofolate dehydrogenase/cyclohydrolase family. Homodimer.

It carries out the reaction (6R)-5,10-methylene-5,6,7,8-tetrahydrofolate + NADP(+) = (6R)-5,10-methenyltetrahydrofolate + NADPH. The enzyme catalyses (6R)-5,10-methenyltetrahydrofolate + H2O = (6R)-10-formyltetrahydrofolate + H(+). It participates in one-carbon metabolism; tetrahydrofolate interconversion. Catalyzes the oxidation of 5,10-methylenetetrahydrofolate to 5,10-methenyltetrahydrofolate and then the hydrolysis of 5,10-methenyltetrahydrofolate to 10-formyltetrahydrofolate. In Rhizorhabdus wittichii (strain DSM 6014 / CCUG 31198 / JCM 15750 / NBRC 105917 / EY 4224 / RW1) (Sphingomonas wittichii), this protein is Bifunctional protein FolD 1.